The sequence spans 110 residues: Ribonuclease P protein component 4 (110 aa).

Zn(2+) contacts are provided by Cys65, Cys68, Cys94, and Cys97.

It belongs to the eukaryotic/archaeal RNase P protein component 4 family. As to quaternary structure, consists of a catalytic RNA component and at least 4-5 protein subunits. It depends on Zn(2+) as a cofactor.

Its subcellular location is the cytoplasm. The enzyme catalyses Endonucleolytic cleavage of RNA, removing 5'-extranucleotides from tRNA precursor.. In terms of biological role, part of ribonuclease P, a protein complex that generates mature tRNA molecules by cleaving their 5'-ends. The chain is Ribonuclease P protein component 4 from Methanococcus maripaludis (strain C5 / ATCC BAA-1333).